We begin with the raw amino-acid sequence, 667 residues long: tRNA 5-methylaminomethyl-2-thiouridine biosynthesis bifunctional protein MnmC (667 aa).

Residues M1–I12 show a composition bias toward polar residues. The tract at residues M1–H20 is disordered. The segment at M1–E240 is tRNA (mnm(5)s(2)U34)-methyltransferase. The FAD-dependent cmnm(5)s(2)U34 oxidoreductase stretch occupies residues I268–L667.

In the N-terminal section; belongs to the methyltransferase superfamily. tRNA (mnm(5)s(2)U34)-methyltransferase family. This sequence in the C-terminal section; belongs to the DAO family. Requires FAD as cofactor.

It localises to the cytoplasm. It carries out the reaction 5-aminomethyl-2-thiouridine(34) in tRNA + S-adenosyl-L-methionine = 5-methylaminomethyl-2-thiouridine(34) in tRNA + S-adenosyl-L-homocysteine + H(+). Its function is as follows. Catalyzes the last two steps in the biosynthesis of 5-methylaminomethyl-2-thiouridine (mnm(5)s(2)U) at the wobble position (U34) in tRNA. Catalyzes the FAD-dependent demodification of cmnm(5)s(2)U34 to nm(5)s(2)U34, followed by the transfer of a methyl group from S-adenosyl-L-methionine to nm(5)s(2)U34, to form mnm(5)s(2)U34. The sequence is that of tRNA 5-methylaminomethyl-2-thiouridine biosynthesis bifunctional protein MnmC from Magnetococcus marinus (strain ATCC BAA-1437 / JCM 17883 / MC-1).